We begin with the raw amino-acid sequence, 84 residues long: Mitochondrial import inner membrane translocase subunit Tim9 (84 aa).

Positions 36 to 60 (CFQSCITNFRIRKLDDEEQLCVYKC) match the Twin CX3C motif motif. Intrachain disulfides connect cysteine 36-cysteine 60 and cysteine 40-cysteine 56.

The protein belongs to the small Tim family. As to quaternary structure, heterohexamer; composed of 3 copies of timm9 and 3 copies of timm10, named soluble 70 kDa complex. Associates directly with the TIM22 complex, whose core is composed of timm22. Interacts with the transmembrane regions of multi-pass transmembrane proteins in transit.

The protein localises to the mitochondrion inner membrane. Component of the TIM22 complex, a complex that mediates the import and insertion of multi-pass transmembrane proteins into the mitochondrial inner membrane. The TIM22 complex forms a twin-pore translocase that uses the membrane potential as external driving force. This chain is Mitochondrial import inner membrane translocase subunit Tim9 (timm9), found in Dictyostelium discoideum (Social amoeba).